The following is a 168-amino-acid chain: Mediator of RNA polymerase II transcription subunit 7a (168 aa).

Coiled-coil stretches lie at residues 64 to 92 (KDSN…ADVL) and 132 to 166 (IMEL…LTLD).

It belongs to the Mediator complex subunit 7 family. Component of the Mediator complex. Interacts with MEE14/CBP1.

It is found in the nucleus. Component of the Mediator complex, a coactivator involved in the regulated transcription of nearly all RNA polymerase II-dependent genes. Mediator functions as a bridge to convey information from gene-specific regulatory proteins to the basal RNA polymerase II transcription machinery. The Mediator complex, having a compact conformation in its free form, is recruited to promoters by direct interactions with regulatory proteins and serves for the assembly of a functional pre-initiation complex with RNA polymerase II and the general transcription factors. The polypeptide is Mediator of RNA polymerase II transcription subunit 7a (MED7A) (Arabidopsis thaliana (Mouse-ear cress)).